Reading from the N-terminus, the 124-residue chain is uncharacterized protein (124 aa).

Its subcellular location is the plastid. It is found in the chloroplast. This is an uncharacterized protein from Chlamydomonas reinhardtii (Chlamydomonas smithii).